An 89-amino-acid polypeptide reads, in one-letter code: Large ribosomal subunit protein bL27 (89 aa).

The segment at Met-1–Lys-24 is disordered.

It belongs to the bacterial ribosomal protein bL27 family.

This chain is Large ribosomal subunit protein bL27, found in Maricaulis maris (strain MCS10) (Caulobacter maris).